The following is a 775-amino-acid chain: Chitin synthase 6 (775 aa).

The next 6 helical transmembrane spans lie at 19-39, 54-74, 94-114, 441-461, 470-490, and 498-518; these read VLLM…YCLV, CIIV…IMVV, LQWF…LFCI, FMQN…LAIM, LPVG…LYFG, and IWLY…YMVY. The span at 532 to 541 shows a compositional bias: low complexity; that stretch reads RADAAAADSH. 2 disordered regions span residues 532-603 and 702-775; these read RADA…DGKF and PSAF…KTSR. A compositionally biased stretch (basic and acidic residues) spans 542–556; it reads TTAREAAEQAEKQGD. The span at 577-586 shows a compositional bias: polar residues; the sequence is NRESTTTSEL. The segment covering 702–713 has biased composition (low complexity); that stretch reads PSAFPHAHSASA. An N-linked (GlcNAc...) asparagine glycan is attached at asparagine 724. Residues 732–741 show a composition bias toward basic and acidic residues; the sequence is RSEDIQRFSE. Polar residues predominate over residues 754-763; sequence SRNVGNSSFA. N-linked (GlcNAc...) asparagine glycosylation occurs at asparagine 759. Residues 766 to 775 show a composition bias toward basic residues; it reads MAKRTPKTSR.

It belongs to the chitin synthase family. Class VII subfamily.

The protein localises to the cell membrane. It carries out the reaction [(1-&gt;4)-N-acetyl-beta-D-glucosaminyl](n) + UDP-N-acetyl-alpha-D-glucosamine = [(1-&gt;4)-N-acetyl-beta-D-glucosaminyl](n+1) + UDP + H(+). Functionally, polymerizes chitin, a structural polymer of the cell wall and septum, by transferring the sugar moiety of UDP-GlcNAc to the non-reducing end of the growing chitin polymer. Shows additive effects in septum formation with CHS1, CHS2, CHS3A, CHS4, CHS5 and CHS7. Involved in virulence and mediates mycotoxin deoxinivalenol (DON) biosynthesis via the regulation of the expression of TRI4, TRI5 and TRI6. This is Chitin synthase 6 from Gibberella zeae (strain ATCC MYA-4620 / CBS 123657 / FGSC 9075 / NRRL 31084 / PH-1) (Wheat head blight fungus).